The sequence spans 391 residues: Anhydro-N-acetylmuramic acid kinase (391 aa).

9 to 16 (GTSYDAVE) serves as a coordination point for ATP.

The protein belongs to the anhydro-N-acetylmuramic acid kinase family.

It carries out the reaction 1,6-anhydro-N-acetyl-beta-muramate + ATP + H2O = N-acetyl-D-muramate 6-phosphate + ADP + H(+). It functions in the pathway amino-sugar metabolism; 1,6-anhydro-N-acetylmuramate degradation. Its pathway is cell wall biogenesis; peptidoglycan recycling. In terms of biological role, catalyzes the specific phosphorylation of 1,6-anhydro-N-acetylmuramic acid (anhMurNAc) with the simultaneous cleavage of the 1,6-anhydro ring, generating MurNAc-6-P. Is required for the utilization of anhMurNAc either imported from the medium or derived from its own cell wall murein, and thus plays a role in cell wall recycling. The chain is Anhydro-N-acetylmuramic acid kinase from Streptomyces coelicolor (strain ATCC BAA-471 / A3(2) / M145).